Reading from the N-terminus, the 101-residue chain is Large ribosomal subunit protein bL21 (101 aa).

This sequence belongs to the bacterial ribosomal protein bL21 family. In terms of assembly, part of the 50S ribosomal subunit. Contacts protein L20.

Its function is as follows. This protein binds to 23S rRNA in the presence of protein L20. In Beutenbergia cavernae (strain ATCC BAA-8 / DSM 12333 / CCUG 43141 / JCM 11478 / NBRC 16432 / NCIMB 13614 / HKI 0122), this protein is Large ribosomal subunit protein bL21.